The primary structure comprises 359 residues: MSKPPSDLPRRPPAAFAYEDEAAEPGDNGRQQQGRRRPESFSEDIVLTPDEEDPFINPDRDPSAVAVATPRKRRTSFGKIALAAFGILLSLGIGLWTDRLIRDLFSRADWLGYAALGVLAIGILAVLALVIREAAGMMRLAAVQTIKAEAEAAILETRPAKARAVVSRLTTLLAANPETSKGRATLKATEGEVIDPPHLIALAERELLAPLDRKARALIVNASKRVSIVTAVSPRAIVDLLYVLYESVRLIRAMAELYGGRPGTLGMFRLLRDVLAHLAVTGSIAVGDSLVQQVLGHGLASKLSARLGEGVINGLMTARIGIAAMDLCRPLAFRAVKRPGIGDFIGDLTPSMSPRGNNP.

Residues 1 to 61 (MSKPPSDLPR…EDPFINPDRD (61 aa)) form a disordered region. Transmembrane regions (helical) follow at residues 77–97 (FGKI…GLWT) and 111–131 (LGYA…ALVI).

It belongs to the UPF0283 family.

The protein resides in the cell inner membrane. The sequence is that of UPF0283 membrane protein RHE_CH02332 from Rhizobium etli (strain ATCC 51251 / DSM 11541 / JCM 21823 / NBRC 15573 / CFN 42).